We begin with the raw amino-acid sequence, 136 residues long: Small ribosomal subunit protein uS9 (136 aa).

The interval 111–136 (DARRTEPHKPSRSTKGPRAKRQKSYR) is disordered. Residues 120-136 (PSRSTKGPRAKRQKSYR) are compositionally biased toward basic residues.

The protein belongs to the universal ribosomal protein uS9 family.

The chain is Small ribosomal subunit protein uS9 (rps9) from Methanocaldococcus jannaschii (strain ATCC 43067 / DSM 2661 / JAL-1 / JCM 10045 / NBRC 100440) (Methanococcus jannaschii).